The chain runs to 1393 residues: MLSRPKPGESEVDLLHFQSQFLAAGAAPAVQLVKKGNRGGGDANSDRPPLQDHRDVVMLDNLPDLPPALVPSPPKRARPSPGHCLPEDEDPEERLRRHDQHITAVLTKIIERDTSSVAVNLPVPSGVAFPAVFLRSRDTQGKSATSGKRSIFAQEIAARRIAEAKGPSVGEVVPNVGPPEGAVTCETPTPRNQGCQLPGSSHSFQGPNLVTGKGLRDQEAEQEAQTIHEENIARLQAMAPEEILQEQQRLLAQLDPSLVAFLRSHSHTQEQTGETASEEQRPGGPSANVTKEEPLMSAFASEPRKRDKLEPEAPALALPVTPQKEWLHMDTVELEKLHWTQDLPPVRRQQTQERMQARFSLQGELLAPDVDLPTHLGLHHHGEEAERAGYSLQELFHLTRSQVSQQRALALHVLAQVISRAQAGEFGDRLAGSVLSLLLDAGFLFLLRFSLDDRVDGVIATAIRALRALLVAPGDEELLDSTFSWYHGALTFPLMPSQEDKEDEDEDEECPAGKAKRKSPEEESRPPPDLARHDVIKGLLATSLLPRLRYVLEVTYPGPAVVLDILAVLIRLARHSLESATRVLECPRLIETIVREFLPTSWSPVGAGPTPSLYKVPCATAMKLLRVLASAGRNIAARLLSSFDLRSRLCRIIAEAPQELALPPEEAEMLSTEALRLWAVAASYGQGGYLYRELYPVLMRALQVVPRELSTHPPQPLSMQRIASLLTLLTQLTLAAGSTPAETISDSAEASLSATPSLVTWTQVSGLQPLVEPCLRQTLKLLSRPEMWRAVGPVPVACLLFLGAYYQAWSQQPSSCPEDWLQDMQRLSEELLLPLLSQPTLGSLWDSLRHCSLLCNPLSCVPALEAPPSLVSLGCSGGCPRLSLAGSASPFPFLTALLSLLNTLAQIHKGLCGQLAAILAAPGLQNYFLQCVAPGAAPHLTPFSAWALRHEYHLQYLALALAQKAAALQPLPATHAALYHGMALALLSRLLPGSEYLTHELLLSCVFRLEFLPERTSGGPEAADFSDQLSLGSSRVPRCGQGTLLAQACQDLPSIRNCYLTHCSPARASLLASQALHRGELQRVPTLLLPMPTEPLLPTDWPFLPLIRLYHRASDTPSGLSPTDTMGTAMRVLQWVLVLESWRPQALWAVPPAARLARLMCVFLVDSELFRESPVQHLVAALLAQLCQPQVLPNLNLDCRLPGLTSFPDLYANFLDHFEAVSFGDHLFGALVLLPLQRRFSVTLRLALFGEHVGALRALSLPLTQLPVSLECYTVPPEDNLALLQLYFRTLVTGALRPRWCPVLYAVAVAHVNSFIFSQDPQSSDEVKAARRSMLQKTWLLADEGLRQHLLHYKLPNSTLPEGFELYSQLPPLRQHYLQRLTSTVLQNGVSET.

Disordered stretches follow at residues 34-53 (KKGN…LQDH), 61-94 (NLPD…PEER), and 266-295 (SHTQ…EEPL). Over residues 64–74 (DLPPALVPSPP) the composition is skewed to pro residues. At Ser-72 the chain carries Phosphoserine. Residue Thr-321 is modified to Phosphothreonine. Residues 496–531 (PSQEDKEDEDEDEECPAGKAKRKSPEEESRPPPDLA) form a disordered region. Positions 500-510 (DKEDEDEDEEC) are enriched in acidic residues. Positions 518-531 (KSPEEESRPPPDLA) are enriched in basic and acidic residues. Ser-1121 carries the post-translational modification Phosphoserine.

The protein belongs to the RPAP1 family. In terms of assembly, part of an RNA polymerase II complex that contains POLR2A, POLR2B, POLR2C, POLR2D, POLR2E, POLR2F, POLR2G, POLR2H, POLR2I, POLR2J, POLR2K, POLR2L, RPAP1, FCP1 plus the general transcription factors TFIIB and TFIIF.

It localises to the nucleus. Forms an interface between the RNA polymerase II enzyme and chaperone/scaffolding protein, suggesting that it is required to connect RNA polymerase II to regulators of protein complex formation. Required for interaction of the RNA polymerase II complex with acetylated histone H3. This is RNA polymerase II-associated protein 1 (RPAP1) from Homo sapiens (Human).